Reading from the N-terminus, the 390-residue chain is Phosphopentomutase (390 aa).

Mn(2+) is bound by residues Asp9, Asp283, His288, Asp324, His325, and His336.

This sequence belongs to the phosphopentomutase family. The cofactor is Mn(2+).

It localises to the cytoplasm. It catalyses the reaction 2-deoxy-alpha-D-ribose 1-phosphate = 2-deoxy-D-ribose 5-phosphate. The catalysed reaction is alpha-D-ribose 1-phosphate = D-ribose 5-phosphate. Its pathway is carbohydrate degradation; 2-deoxy-D-ribose 1-phosphate degradation; D-glyceraldehyde 3-phosphate and acetaldehyde from 2-deoxy-alpha-D-ribose 1-phosphate: step 1/2. Functionally, isomerase that catalyzes the conversion of deoxy-ribose 1-phosphate (dRib-1-P) and ribose 1-phosphate (Rib-1-P) to deoxy-ribose 5-phosphate (dRib-5-P) and ribose 5-phosphate (Rib-5-P), respectively. In Thermotoga maritima (strain ATCC 43589 / DSM 3109 / JCM 10099 / NBRC 100826 / MSB8), this protein is Phosphopentomutase.